Reading from the N-terminus, the 455-residue chain is Ectonucleoside triphosphate diphosphohydrolase 6 (455 aa).

The Cytoplasmic portion of the chain corresponds to 1–12; it reads MRKIPNHGTLRM. Residues 13 to 32 form a helical membrane-spanning segment; it reads TKVAYPLGLCVGLFIYVAYI. Over 33–455 the chain is Lumenal; it reads KWHRASAAQA…SLKRQKVPAL (423 aa). E196 serves as the catalytic Proton acceptor. Cystine bridges form between C297–C327 and C387–C401.

The protein belongs to the GDA1/CD39 NTPase family. Mg(2+) serves as cofactor. Requires Ca(2+) as cofactor. N-glycosylated.

The protein localises to the golgi apparatus membrane. It is found in the secreted. It localises to the cell membrane. The enzyme catalyses a ribonucleoside 5'-diphosphate + H2O = a ribonucleoside 5'-phosphate + phosphate + H(+). The catalysed reaction is IDP + H2O = IMP + phosphate + H(+). It carries out the reaction GDP + H2O = GMP + phosphate + H(+). It catalyses the reaction UDP + H2O = UMP + phosphate + H(+). In terms of biological role, catalyzes the hydrolysis of nucleoside triphosphates and diphosphates in a calcium- or magnesium-dependent manner. Has a strong preference for nucleoside diphosphates, preferentially hydrolyzes GDP, IDP, and UDP, with slower hydrolysis of CDP, ITP, GTP, CTP, ADP, and UTP and virtually no hydrolysis of ATP. The membrane bound form might support glycosylation reactions in the Golgi apparatus and, when released from cells, might catalyze the hydrolysis of extracellular nucleotides. The polypeptide is Ectonucleoside triphosphate diphosphohydrolase 6 (Mus musculus (Mouse)).